A 487-amino-acid chain; its full sequence is L-tartrate/succinate antiporter (487 aa).

14 consecutive transmembrane segments (helical) span residues 10–30 (YLAP…AGLE), 33–53 (TWLY…EPVP), 54–74 (GAVV…WLLF), 93–113 (WAVS…FMFG), 137–157 (TLFL…VTPS), 189–209 (IGSY…AIFL), 236–256 (FLGM…LAYV), 292–312 (LMVG…AAMV), 313–333 (GYSV…DIVS), 340–360 (VFFW…TGFI), 370–390 (SLSG…FYLL), 393–413 (FFAS…AAAL), 418–438 (IPLP…SILT), and 465–485 (IFGL…MPVV).

The protein belongs to the SLC13A/DASS transporter (TC 2.A.47) family. DIT1 subfamily.

It is found in the cell inner membrane. It catalyses the reaction (2R,3R)-tartrate(out) + succinate(in) = (2R,3R)-tartrate(in) + succinate(out). Catalyzes the uptake of tartrate in exchange for intracellular succinate. Essential for anaerobic L-tartrate fermentation. The polypeptide is L-tartrate/succinate antiporter (ttdT) (Shigella flexneri).